The following is a 144-amino-acid chain: Putative pre-16S rRNA nuclease (144 aa).

The protein belongs to the YqgF nuclease family.

It localises to the cytoplasm. Could be a nuclease involved in processing of the 5'-end of pre-16S rRNA. This chain is Putative pre-16S rRNA nuclease, found in Symbiobacterium thermophilum (strain DSM 24528 / JCM 14929 / IAM 14863 / T).